The chain runs to 308 residues: Ribosomal protein L11 methyltransferase (308 aa).

Positions 148, 169, 191, and 239 each coordinate S-adenosyl-L-methionine.

Belongs to the methyltransferase superfamily. PrmA family.

The protein resides in the cytoplasm. It carries out the reaction L-lysyl-[protein] + 3 S-adenosyl-L-methionine = N(6),N(6),N(6)-trimethyl-L-lysyl-[protein] + 3 S-adenosyl-L-homocysteine + 3 H(+). In terms of biological role, methylates ribosomal protein L11. The protein is Ribosomal protein L11 methyltransferase of Psychrobacter arcticus (strain DSM 17307 / VKM B-2377 / 273-4).